The chain runs to 193 residues: Ribonuclease HII (193 aa).

Residues cysteine 15–cysteine 193 enclose the RNase H type-2 domain. A divalent metal cation-binding residues include aspartate 21, glutamate 22, and aspartate 112.

The protein belongs to the RNase HII family. It depends on Mn(2+) as a cofactor. Requires Mg(2+) as cofactor.

It is found in the cytoplasm. It catalyses the reaction Endonucleolytic cleavage to 5'-phosphomonoester.. Endonuclease that specifically degrades the RNA of RNA-DNA hybrids. This chain is Ribonuclease HII, found in Rickettsia conorii (strain ATCC VR-613 / Malish 7).